The chain runs to 84 residues: Small ribosomal subunit protein uS17 (84 aa).

This sequence belongs to the universal ribosomal protein uS17 family. Part of the 30S ribosomal subunit.

Functionally, one of the primary rRNA binding proteins, it binds specifically to the 5'-end of 16S ribosomal RNA. The protein is Small ribosomal subunit protein uS17 of Klebsiella pneumoniae subsp. pneumoniae (strain ATCC 700721 / MGH 78578).